The following is a 173-amino-acid chain: MVSQRRDADAPKDSPKSILESLAGTRVLVVEARYYDDIADELLAGARAAIEAVGAEARVFTVPGALEIPAAIAILMDAGRKAGGPYDAAVALGCVIRGETGHYDIVAGESARALMDLSVAEHLPLGNGILTVETMEQALARARVSDMNKGGGAAEAALSLLAIKRAANLEPAR.

5-amino-6-(D-ribitylamino)uracil is bound by residues Tyr34, 65–67 (ALE), and 94–96 (CVI). 99 to 100 (ET) is a binding site for (2S)-2-hydroxy-3-oxobutyl phosphate. Catalysis depends on His102, which acts as the Proton donor. Asn127 contacts 5-amino-6-(D-ribitylamino)uracil. (2S)-2-hydroxy-3-oxobutyl phosphate is bound at residue Arg141.

This sequence belongs to the DMRL synthase family.

The catalysed reaction is (2S)-2-hydroxy-3-oxobutyl phosphate + 5-amino-6-(D-ribitylamino)uracil = 6,7-dimethyl-8-(1-D-ribityl)lumazine + phosphate + 2 H2O + H(+). It participates in cofactor biosynthesis; riboflavin biosynthesis; riboflavin from 2-hydroxy-3-oxobutyl phosphate and 5-amino-6-(D-ribitylamino)uracil: step 1/2. In terms of biological role, catalyzes the formation of 6,7-dimethyl-8-ribityllumazine by condensation of 5-amino-6-(D-ribitylamino)uracil with 3,4-dihydroxy-2-butanone 4-phosphate. This is the penultimate step in the biosynthesis of riboflavin. The polypeptide is 6,7-dimethyl-8-ribityllumazine synthase (Methylorubrum extorquens (strain CM4 / NCIMB 13688) (Methylobacterium extorquens)).